A 108-amino-acid chain; its full sequence is TYRO protein tyrosine kinase-binding protein (108 aa).

Residues 1-25 form the signal peptide; that stretch reads MEGLRPSDRLLSLLLTVGGLSLVLA. The Extracellular segment spans residues 26-36; it reads QSECNCSSVSP. The helical transmembrane segment at 37 to 57 threads the bilayer; sequence GVLAGIVLGDLMLTLLIALAV. Aspartate 46 lines the Ca(2+) pocket. The Cytoplasmic portion of the chain corresponds to 58 to 108; it reads YYLGRLVPRGRGATEVTRKQHIPETESPYQELQGQRTDVYSDLNTQRPYYK. The disordered stretch occupies residues 71–108; that stretch reads TEVTRKQHIPETESPYQELQGQRTDVYSDLNTQRPYYK. An ITAM domain is found at 75-103; that stretch reads RKQHIPETESPYQELQGQRTDVYSDLNTQ. The segment covering 84 to 108 has biased composition (polar residues); sequence SPYQELQGQRTDVYSDLNTQRPYYK. 2 positions are modified to phosphotyrosine: tyrosine 86 and tyrosine 97.

This sequence belongs to the TYROBP family. Homodimer; disulfide-linked. Homotrimer; disulfide-linked. Homotetramer; disulfide-linked. Homotrimers and homotetramers form when low levels of partner receptors are available and is competitive with assembly with interacting receptors. They may represent alternative oligomerization states or may be intermediates in the receptor assembly process. Binding of a metal cation aids in homooligomerization through coordination of the metal ion by the subunits of the oligomer. Interacts with TREM1. Interacts with TREM2. Interacts with CLECSF5. Interacts with CD300LB and CD300C2. Interacts with CD300E. Interacts (via ITAM domain) with SYK (via SH2 domains); activates SYK mediating neutrophils and macrophages integrin-mediated activation. Interacts with KLRC2. Interacts with CD300H. Interacts with KLRD1. Interacts with SIGLEC1. In terms of processing, following ligand binding by associated receptors, tyrosine phosphorylated in the ITAM domain which leads to activation of additional tyrosine kinases and subsequent cell activation.

Its subcellular location is the cell membrane. Functionally, adapter protein which non-covalently associates with activating receptors found on the surface of a variety of immune cells to mediate signaling and cell activation following ligand binding by the receptors. TYROBP is tyrosine-phosphorylated in the ITAM domain following ligand binding by the associated receptors which leads to activation of additional tyrosine kinases and subsequent cell activation. Also has an inhibitory role in some cells. Non-covalently associates with activating receptors of the CD300 family to mediate cell activation. Also mediates cell activation through association with activating receptors of the CD200R family. Required for neutrophil activation mediated by integrin. Required for the activation of myeloid cells mediated by the CLEC5A/MDL1 receptor. Associates with natural killer (NK) cell receptors such as the KLRD1/KLRC2 heterodimer to mediate NK cell activation. Associates with TREM1 to mediate activation of neutrophils and monocytes. Associates with TREM2 on monocyte-derived dendritic cells to mediate up-regulation of chemokine receptor CCR7 and dendritic cell maturation and survival. Association with TREM2 mediates cytokine-induced formation of multinucleated giant cells which are formed by the fusion of macrophages. Stabilizes the TREM2 C-terminal fragment (TREM2-CTF) produced by TREM2 ectodomain shedding which suppresses the release of pro-inflammatory cytokines. In microglia, required with TREM2 for phagocytosis of apoptotic neurons. Required with ITGAM/CD11B in microglia to control production of microglial superoxide ions which promote the neuronal apoptosis that occurs during brain development. Promotes pro-inflammatory responses in microglia following nerve injury which accelerates degeneration of injured neurons. Positively regulates the expression of the IRAK3/IRAK-M kinase and IL10 production by liver dendritic cells and inhibits their T cell allosimulatory ability. Negatively regulates B cell proliferation. Required for CSF1-mediated osteoclast cytoskeletal organization. Positively regulates multinucleation during osteoclast development. The chain is TYRO protein tyrosine kinase-binding protein from Bos taurus (Bovine).